The chain runs to 206 residues: Large ribosomal subunit protein uL4 (206 aa).

The tract at residues 63 to 97 is disordered; that stretch reads MYKQKGTGRARHHSARAPQFRGGGKAHGPVVRSHE. Basic residues predominate over residues 64 to 77; that stretch reads YKQKGTGRARHHSA.

It belongs to the universal ribosomal protein uL4 family. Part of the 50S ribosomal subunit.

Functionally, one of the primary rRNA binding proteins, this protein initially binds near the 5'-end of the 23S rRNA. It is important during the early stages of 50S assembly. It makes multiple contacts with different domains of the 23S rRNA in the assembled 50S subunit and ribosome. Forms part of the polypeptide exit tunnel. In Rhizobium rhizogenes (strain K84 / ATCC BAA-868) (Agrobacterium radiobacter), this protein is Large ribosomal subunit protein uL4.